Here is a 341-residue protein sequence, read N- to C-terminus: UDP-3-O-acylglucosamine N-acyltransferase (341 aa).

Residue histidine 241 is the Proton acceptor of the active site.

Belongs to the transferase hexapeptide repeat family. LpxD subfamily. As to quaternary structure, homotrimer.

It catalyses the reaction a UDP-3-O-[(3R)-3-hydroxyacyl]-alpha-D-glucosamine + a (3R)-hydroxyacyl-[ACP] = a UDP-2-N,3-O-bis[(3R)-3-hydroxyacyl]-alpha-D-glucosamine + holo-[ACP] + H(+). The protein operates within bacterial outer membrane biogenesis; LPS lipid A biosynthesis. In terms of biological role, catalyzes the N-acylation of UDP-3-O-acylglucosamine using 3-hydroxyacyl-ACP as the acyl donor. Is involved in the biosynthesis of lipid A, a phosphorylated glycolipid that anchors the lipopolysaccharide to the outer membrane of the cell. This is UDP-3-O-acylglucosamine N-acyltransferase from Histophilus somni (strain 129Pt) (Haemophilus somnus).